Consider the following 182-residue polypeptide: dCTP deaminase, dUMP-forming (182 aa).

Residues R96–R101, D113, T121–E123, Q142, Y156, and Q163 contribute to the dCTP site. Residue E123 is the Proton donor/acceptor of the active site.

It belongs to the dCTP deaminase family. As to quaternary structure, homotrimer.

The catalysed reaction is dCTP + 2 H2O = dUMP + NH4(+) + diphosphate. It participates in pyrimidine metabolism; dUMP biosynthesis; dUMP from dCTP: step 1/1. Its function is as follows. Bifunctional enzyme that catalyzes both the deamination of dCTP to dUTP and the hydrolysis of dUTP to dUMP without releasing the toxic dUTP intermediate. In Halothermothrix orenii (strain H 168 / OCM 544 / DSM 9562), this protein is dCTP deaminase, dUMP-forming.